The chain runs to 509 residues: Hyaluronidase PH-20 (509 aa).

Residues 1-35 form the signal peptide; it reads MGVLKFKHIFFRSFVKSSGVSQIVFTFLLIPCCLT. Disulfide bonds link C60-C351 and C224-C238. N82 carries N-linked (GlcNAc...) asparagine glycosylation. E148 acts as the Proton donor in catalysis. N166, N235, N254, and N368 each carry an N-linked (GlcNAc...) asparagine glycan. Disulfide bonds link C376-C387, C381-C435, and C437-C464. The N-linked (GlcNAc...) asparagine glycan is linked to N393. S490 carries the GPI-anchor amidated serine lipid modification. Positions 491 to 509 are cleaved as a propeptide — removed in mature form; it reads ATMFIVSILFLIISSVASL.

Belongs to the glycosyl hydrolase 56 family. Post-translationally, N-glycosylated. Testis.

It is found in the cell membrane. The enzyme catalyses Random hydrolysis of (1-&gt;4)-linkages between N-acetyl-beta-D-glucosamine and D-glucuronate residues in hyaluronate.. Involved in sperm-egg adhesion. Upon fertilization sperm must first penetrate a layer of cumulus cells that surrounds the egg before reaching the zona pellucida. The cumulus cells are embedded in a matrix containing hyaluronic acid which is formed prior to ovulation. This protein aids in penetrating the layer of cumulus cells by digesting hyaluronic acid. This Homo sapiens (Human) protein is Hyaluronidase PH-20 (SPAM1).